Here is a 188-residue protein sequence, read N- to C-terminus: Elongation factor P (188 aa).

This sequence belongs to the elongation factor P family.

It localises to the cytoplasm. It participates in protein biosynthesis; polypeptide chain elongation. Functionally, involved in peptide bond synthesis. Stimulates efficient translation and peptide-bond synthesis on native or reconstituted 70S ribosomes in vitro. Probably functions indirectly by altering the affinity of the ribosome for aminoacyl-tRNA, thus increasing their reactivity as acceptors for peptidyl transferase. In Chlorobium limicola (strain DSM 245 / NBRC 103803 / 6330), this protein is Elongation factor P.